The primary structure comprises 184 residues: MISNVTEALSNFTRCYVDLWQKETGAPPASRELYGVPSPCITQTGDNIVYWLPQPFPLEEKLNSVEVALDIQLQPAIHDFYTSQLAGDMTVTFEGQRLSLIQVWSEDDFIRLQENLIGHLVTQKRLKLSPTAFIATMESDDMGIISLCNLTGEVILEQFGSHKRERLFTDLVGFLGAIEPVFMR.

Belongs to the Syd family.

It is found in the cell inner membrane. In terms of biological role, interacts with the SecY protein in vivo. May bind preferentially to an uncomplexed state of SecY, thus functioning either as a chelating agent for excess SecY in the cell or as a regulatory factor that negatively controls the translocase function. This Photorhabdus laumondii subsp. laumondii (strain DSM 15139 / CIP 105565 / TT01) (Photorhabdus luminescens subsp. laumondii) protein is Protein Syd.